The sequence spans 436 residues: UDP-N-acetylglucosamine 1-carboxyvinyltransferase 1 (436 aa).

Lys-22–Asn-23 serves as a coordination point for phosphoenolpyruvate. Residue Arg-93 participates in UDP-N-acetyl-alpha-D-glucosamine binding. The active-site Proton donor is Cys-117. A 2-(S-cysteinyl)pyruvic acid O-phosphothioketal modification is found at Cys-117. Residues Arg-122 to Gln-126, Asp-306, and Val-328 each bind UDP-N-acetyl-alpha-D-glucosamine.

Belongs to the EPSP synthase family. MurA subfamily.

The protein resides in the cytoplasm. The catalysed reaction is phosphoenolpyruvate + UDP-N-acetyl-alpha-D-glucosamine = UDP-N-acetyl-3-O-(1-carboxyvinyl)-alpha-D-glucosamine + phosphate. Its pathway is cell wall biogenesis; peptidoglycan biosynthesis. In terms of biological role, cell wall formation. Adds enolpyruvyl to UDP-N-acetylglucosamine. Essential for cell growth. This chain is UDP-N-acetylglucosamine 1-carboxyvinyltransferase 1, found in Bacillus subtilis (strain 168).